The chain runs to 750 residues: Methylmalonyl-CoA mutase, mitochondrial (750 aa).

The transit peptide at Met-1–Leu-32 directs the protein to the mitochondrion. Position 50 (Gln-50) interacts with malonyl-CoA. Lys-89 carries the post-translational modification N6-acetyllysine. Malonyl-CoA-binding positions include Tyr-96–Met-99 and Thr-106–Tyr-110. Residue Lys-212 is modified to N6-acetyllysine. Residues Thr-216–Gln-218, Arg-228, Lys-255, His-265, and Arg-304–Ser-306 each bind malonyl-CoA. Lys-335 bears the N6-acetyllysine mark. An N6-succinyllysine modification is found at Lys-343. Phosphoserine is present on Ser-481. Position 595 is an N6-succinyllysine (Lys-595). The residue at position 602 (Lys-602) is an N6-acetyllysine. The region spanning Arg-614 to Lys-746 is the B12-binding domain. His-627 lines the adenosylcob(III)alamin pocket.

Belongs to the methylmalonyl-CoA mutase family. As to quaternary structure, homodimer. Interacts (the apoenzyme form) with MMAA; the interaction is GTP dependent. Adenosylcob(III)alamin serves as cofactor.

It is found in the mitochondrion matrix. The protein localises to the mitochondrion. It localises to the cytoplasm. It carries out the reaction (R)-methylmalonyl-CoA = succinyl-CoA. Its activity is regulated as follows. Inhibited by itaconyl-CoA, a metabolite that inactivates the coenzyme B12 cofactor. Catalyzes the reversible isomerization of methylmalonyl-CoA (MMCoA) (generated from branched-chain amino acid metabolism and degradation of dietary odd chain fatty acids and cholesterol) to succinyl-CoA (3-carboxypropionyl-CoA), a key intermediate of the tricarboxylic acid cycle. This Pongo abelii (Sumatran orangutan) protein is Methylmalonyl-CoA mutase, mitochondrial (MMUT).